A 329-amino-acid polypeptide reads, in one-letter code: MVKTQRVVITPGEPAGIGPDLVVQLAQREWPVELVVCADATLLTNRAAMLGLPLTLRPYSPNSPAQPQTAGTLTLLPVALRESVTAGQLAVENGHYVVETLARACDGCLNGEFAALITGPVHKGVINDAGIPFTGHTEFFEERSQAKKVVMMLATEELRVALATTHLPLRDIADAITPALLHEVIAILHHDLRTKFGIAEPRILVCGLNPHAGEGGHMGTEEIDTIIPVLDELRAQGMKLNGPLPADTLFQPKYLDNADAVLAMYHDQGLPVLKYQGFGRGVNITLGLPFIRTSVDHGTALELAGRGKADVGSFITALNLAIKMIVNTQ.

The substrate site is built by His-136 and Thr-137. A divalent metal cation is bound by residues His-166, His-211, and His-266. Residues Lys-274, Asn-283, and Arg-292 each contribute to the substrate site.

The protein belongs to the PdxA family. Homodimer. Requires Zn(2+) as cofactor. The cofactor is Mg(2+). Co(2+) serves as cofactor.

It localises to the cytoplasm. It carries out the reaction 4-(phosphooxy)-L-threonine + NAD(+) = 3-amino-2-oxopropyl phosphate + CO2 + NADH. Its pathway is cofactor biosynthesis; pyridoxine 5'-phosphate biosynthesis; pyridoxine 5'-phosphate from D-erythrose 4-phosphate: step 4/5. Catalyzes the NAD(P)-dependent oxidation of 4-(phosphooxy)-L-threonine (HTP) into 2-amino-3-oxo-4-(phosphooxy)butyric acid which spontaneously decarboxylates to form 3-amino-2-oxopropyl phosphate (AHAP). The polypeptide is 4-hydroxythreonine-4-phosphate dehydrogenase (Escherichia coli O17:K52:H18 (strain UMN026 / ExPEC)).